We begin with the raw amino-acid sequence, 354 residues long: Methylthioribose-1-phosphate isomerase (354 aa).

Substrate is bound by residues 58–60 (RGA), R101, and Q204. Residue D245 is the Proton donor of the active site. A substrate-binding site is contributed by 255-256 (NK).

Belongs to the eIF-2B alpha/beta/delta subunits family. MtnA subfamily.

It carries out the reaction 5-(methylsulfanyl)-alpha-D-ribose 1-phosphate = 5-(methylsulfanyl)-D-ribulose 1-phosphate. Its pathway is amino-acid biosynthesis; L-methionine biosynthesis via salvage pathway; L-methionine from S-methyl-5-thio-alpha-D-ribose 1-phosphate: step 1/6. Catalyzes the interconversion of methylthioribose-1-phosphate (MTR-1-P) into methylthioribulose-1-phosphate (MTRu-1-P). The protein is Methylthioribose-1-phosphate isomerase of Xanthomonas axonopodis pv. citri (strain 306).